A 223-amino-acid chain; its full sequence is Large ribosomal subunit protein uL3 (223 aa).

The interval 137-157 (GRASHGNSRSHNVPGSIGMAQ) is disordered. Q157 carries the N5-methylglutamine modification.

Belongs to the universal ribosomal protein uL3 family. Part of the 50S ribosomal subunit. Forms a cluster with proteins L14 and L19. Methylated by PrmB.

Functionally, one of the primary rRNA binding proteins, it binds directly near the 3'-end of the 23S rRNA, where it nucleates assembly of the 50S subunit. In Burkholderia pseudomallei (strain 1106a), this protein is Large ribosomal subunit protein uL3.